Consider the following 41-residue polypeptide: Diuretic hormone 1 (41 aa).

Isoleucine amide is present on isoleucine 41.

It is found in the secreted. Its function is as follows. Regulation of fluid secretion. May stimulate primary urine secretion by Malpighian tubules and causes a dose-dependent stimulation of cAMP levels in the tubules. This chain is Diuretic hormone 1, found in Hyles lineata (White-lined sphinx moth).